A 346-amino-acid polypeptide reads, in one-letter code: MDDNKAKALAAALSQIEKQFGKGSIMRMGDGTIERDIQTVSTGSLGLDIALGLGGLPRGRVVEIYGPESSGKTTLTLQVIAEMQKLGGTAAFIDAEHALDVGYAEKLGVNIQDLLISQPDTGEQALEIADMLVRSGGVEIVVIDSVAALTPKAEIEGEMGDQLPGLQARLMSQALRKLTANIKRTNTLVIFINQIRMKIGVMFGSPETTTGGNALKFYASVRLDIRRTGAIKKGDEVVGSETRCKVVKNKVAPPFKEAHFDILYGEGISREGEIIDLGVQHKIVDKSGAWYAYKGEKIGQGKDNSREFLRANPALAREIENKVRAQVGLNAMAVEAAPAGVAPVEP.

Residue 66 to 73 (GPESSGKT) participates in ATP binding.

It belongs to the RecA family.

The protein localises to the cytoplasm. Functionally, can catalyze the hydrolysis of ATP in the presence of single-stranded DNA, the ATP-dependent uptake of single-stranded DNA by duplex DNA, and the ATP-dependent hybridization of homologous single-stranded DNAs. It interacts with LexA causing its activation and leading to its autocatalytic cleavage. This chain is Protein RecA, found in Aromatoleum aromaticum (strain DSM 19018 / LMG 30748 / EbN1) (Azoarcus sp. (strain EbN1)).